We begin with the raw amino-acid sequence, 153 residues long: Ribosome maturation factor RimP (153 aa).

It belongs to the RimP family.

The protein resides in the cytoplasm. Its function is as follows. Required for maturation of 30S ribosomal subunits. In Nostoc sp. (strain PCC 7120 / SAG 25.82 / UTEX 2576), this protein is Ribosome maturation factor RimP.